The chain runs to 283 residues: Phosphatidylglycerol--prolipoprotein diacylglyceryl transferase (283 aa).

4 helical membrane passes run 19–39, 59–79, 90–110, and 120–140; these read IGPI…LIGV, LSIW…VLFQ, IIAI…GTLA, and VPFW…QAIG. A 1,2-diacyl-sn-glycero-3-phospho-(1'-sn-glycerol) is bound at residue R141. 3 consecutive transmembrane segments (helical) span residues 181 to 201, 212 to 232, and 245 to 265; these read TFLY…TLFF, VGTL…WIEG, and IAQV…AWLY.

It belongs to the Lgt family.

Its subcellular location is the cell inner membrane. The catalysed reaction is L-cysteinyl-[prolipoprotein] + a 1,2-diacyl-sn-glycero-3-phospho-(1'-sn-glycerol) = an S-1,2-diacyl-sn-glyceryl-L-cysteinyl-[prolipoprotein] + sn-glycerol 1-phosphate + H(+). The protein operates within protein modification; lipoprotein biosynthesis (diacylglyceryl transfer). In terms of biological role, catalyzes the transfer of the diacylglyceryl group from phosphatidylglycerol to the sulfhydryl group of the N-terminal cysteine of a prolipoprotein, the first step in the formation of mature lipoproteins. The sequence is that of Phosphatidylglycerol--prolipoprotein diacylglyceryl transferase from Nostoc sp. (strain PCC 7120 / SAG 25.82 / UTEX 2576).